The sequence spans 133 residues: Large-conductance mechanosensitive channel (133 aa).

2 helical membrane-spanning segments follow: residues 14 to 34 (VVDLAVAVVIGAAFGTVVTTL) and 73 to 93 (FITVLLNFVIIAAAIYFMVVV).

The protein belongs to the MscL family. In terms of assembly, homopentamer.

It is found in the cell membrane. Channel that opens in response to stretch forces in the membrane lipid bilayer. May participate in the regulation of osmotic pressure changes within the cell. This is Large-conductance mechanosensitive channel from Renibacterium salmoninarum (strain ATCC 33209 / DSM 20767 / JCM 11484 / NBRC 15589 / NCIMB 2235).